Reading from the N-terminus, the 358-residue chain is Purine permease 2 (358 aa).

10 helical membrane-spanning segments follow: residues Val6–Met26, Ile37–Leu57, Phe74–Phe94, Thr110–Val130, Phe134–Leu154, Val170–Val190, Phe209–Gly229, Val262–Phe282, Val288–Phe308, and Phe312–Tyr332. Residues Val46 to Leu154 enclose the EamA domain.

This sequence belongs to the purine permeases (TC 2.A.7.14) family. As to expression, expressed in the vascular system of leaves. Restricted to the phloem. Expressed in flowers and roots and not detected in stems.

The protein resides in the membrane. Its activity is regulated as follows. Competitive inhibition of adenine transport by isopentenyladenine, kinetin, benzylaminopurine, trans- and cis-zeatin and trans-zeatin riboside. Its function is as follows. Mediates adenine transport. May be involved in the uptake of cytokinin analogs. The chain is Purine permease 2 (PUP2) from Arabidopsis thaliana (Mouse-ear cress).